Consider the following 1033-residue polypeptide: Isoleucine--tRNA ligase 2 (1033 aa).

The 'HIGH' region signature appears at 47–57 (PTANGLPHVGH). The short motif at 590 to 594 (KMSKS) is the 'KMSKS' region element. Lys-593 serves as a coordination point for ATP.

Belongs to the class-I aminoacyl-tRNA synthetase family. IleS type 2 subfamily. As to quaternary structure, monomer. The cofactor is Zn(2+).

The protein localises to the cytoplasm. It catalyses the reaction tRNA(Ile) + L-isoleucine + ATP = L-isoleucyl-tRNA(Ile) + AMP + diphosphate. In terms of biological role, catalyzes the attachment of isoleucine to tRNA(Ile). As IleRS can inadvertently accommodate and process structurally similar amino acids such as valine, to avoid such errors it has two additional distinct tRNA(Ile)-dependent editing activities. One activity is designated as 'pretransfer' editing and involves the hydrolysis of activated Val-AMP. The other activity is designated 'posttransfer' editing and involves deacylation of mischarged Val-tRNA(Ile). This Bacillus cereus (strain ATCC 14579 / DSM 31 / CCUG 7414 / JCM 2152 / NBRC 15305 / NCIMB 9373 / NCTC 2599 / NRRL B-3711) protein is Isoleucine--tRNA ligase 2.